The chain runs to 269 residues: 4-chlorobenzoyl coenzyme A dehalogenase (269 aa).

Substrate contacts are provided by residues arginine 24 and 62–67 (AGFYLR). Residue histidine 90 is the Proton acceptor of the active site. Glycine 114 is a substrate binding site. Aspartate 145 (nucleophile) is an active-site residue. A substrate-binding site is contributed by arginine 257.

It belongs to the enoyl-CoA hydratase/isomerase family. In terms of assembly, homotetramer. Homotetramer, homooctamer and larger multimers. Homotrimer.

The catalysed reaction is 4-chlorobenzoyl-CoA + H2O = 4-hydroxybenzoyl-CoA + chloride + H(+). The protein operates within xenobiotic degradation; 4-chlorobenzoate degradation; 4-hydroxybenzoate from 4-chlorobenzoate: step 2/3. Inactivated by 1 mM Ag(+) and by 5 mM Cu(2+). Partially inhibited by 5 mM Zn(2+), Mn(2+), Co(2+), Fe(2+) and Ni(2+). Unaffected by 10 mM Na(+), K(+) and Li(+) and by 0.5 mM Mg(2+), Mn(2+), Fe(2+), Ca(2+), Co(2+) and Zn(2+). Inhibited by the sulfhydryl blocking agent 5,5'-dithio-bis-(2-nitrobenzoate), SDS and N-bromosuccinimide. Unaffected by sodium azide and EDTA. Inactivated following treatment with diethyl pyrocarbonate; this inactivation is reversible by treatment with hydroxylamine. In terms of biological role, dehalogenates 4-chlorobenzoyl-CoA, 4-iodobenzoyl-CoA and 4-bromobenzoyl-CoA, but not 4-fluorobenzoyl-CoA. Inactive towards crotonyl-CoA, alpha-methylcrotonyl-CoA and beta-methylcrotonyl-CoA. This is 4-chlorobenzoyl coenzyme A dehalogenase from Pseudomonas sp. (strain CBS-3).